We begin with the raw amino-acid sequence, 524 residues long: N-acetylgalactosamine-6-sulfatase (524 aa).

An N-terminal signal peptide occupies residues 1 to 27 (MTACSTAIRAQQLLLPVLSALGLLAAG). The interval 28–381 (APQPPNIVLL…PTMLQGHIID (354 aa)) is catalytic domain. The Ca(2+) site is built by Asp40, Asp41, and Cys80. Cys80 (nucleophile) is an active-site residue. 3-oxoalanine (Cys) is present on Cys80. His143 is a catalytic residue. N-linked (GlcNAc...) asparagine glycosylation occurs at Asn205. Ca(2+)-binding residues include Asp290 and Asn291. Cys310 and Cys421 are disulfide-bonded. Asn425 carries N-linked (GlcNAc...) asparagine glycosylation. Intrachain disulfides connect Cys491-Cys520 and Cys503-Cys509.

The protein belongs to the sulfatase family. As to quaternary structure, homodimer. The cofactor is Ca(2+). The conversion to 3-oxoalanine (also known as C-formylglycine, FGly), of a serine or cysteine residue in prokaryotes and of a cysteine residue in eukaryotes, is critical for catalytic activity.

Its subcellular location is the lysosome. It carries out the reaction Hydrolysis of the 6-sulfate groups of the N-acetyl-D-galactosamine 6-sulfate units of chondroitin sulfate and of the D-galactose 6-sulfate units of keratan sulfate.. In Rattus norvegicus (Rat), this protein is N-acetylgalactosamine-6-sulfatase (Galns).